The chain runs to 200 residues: Dephospho-CoA kinase (200 aa).

Residues 3–200 (VLGLTGSIGM…LSGKPAAATR (198 aa)) enclose the DPCK domain. 11 to 16 (GMGKTT) provides a ligand contact to ATP.

It belongs to the CoaE family.

Its subcellular location is the cytoplasm. The catalysed reaction is 3'-dephospho-CoA + ATP = ADP + CoA + H(+). Its pathway is cofactor biosynthesis; coenzyme A biosynthesis; CoA from (R)-pantothenate: step 5/5. Functionally, catalyzes the phosphorylation of the 3'-hydroxyl group of dephosphocoenzyme A to form coenzyme A. The protein is Dephospho-CoA kinase of Brucella melitensis biotype 1 (strain ATCC 23456 / CCUG 17765 / NCTC 10094 / 16M).